Here is a 118-residue protein sequence, read N- to C-terminus: Small ribosomal subunit protein uS13 (118 aa).

A disordered region spans residues 94–118 (NLPVRGQNTKNNARTRKGPIRSIKR). Residues 106 to 118 (ARTRKGPIRSIKR) show a composition bias toward basic residues.

Belongs to the universal ribosomal protein uS13 family. Part of the 30S ribosomal subunit. Forms a loose heterodimer with protein S19. Forms two bridges to the 50S subunit in the 70S ribosome.

Its function is as follows. Located at the top of the head of the 30S subunit, it contacts several helices of the 16S rRNA. In the 70S ribosome it contacts the 23S rRNA (bridge B1a) and protein L5 of the 50S subunit (bridge B1b), connecting the 2 subunits; these bridges are implicated in subunit movement. Contacts the tRNAs in the A and P-sites. This Psychrobacter sp. (strain PRwf-1) protein is Small ribosomal subunit protein uS13.